The primary structure comprises 269 residues: Energy-coupling factor transporter ATP-binding protein EcfA1 (269 aa).

Residues 8–242 enclose the ABC transporter domain; that stretch reads IVFKNVSFQY…AEELTTIGLD (235 aa). 42–49 provides a ligand contact to ATP; it reads GHNGSGKS.

Belongs to the ABC transporter superfamily. Energy-coupling factor EcfA family. Forms a stable energy-coupling factor (ECF) transporter complex composed of 2 membrane-embedded substrate-binding proteins (S component), 2 ATP-binding proteins (A component) and 2 transmembrane proteins (T component).

It is found in the cell membrane. In terms of biological role, ATP-binding (A) component of a common energy-coupling factor (ECF) ABC-transporter complex. Unlike classic ABC transporters this ECF transporter provides the energy necessary to transport a number of different substrates. This Staphylococcus aureus (strain MSSA476) protein is Energy-coupling factor transporter ATP-binding protein EcfA1.